Consider the following 1430-residue polypeptide: DNA-directed RNA polymerase subunit beta' (1430 aa).

Zn(2+) is bound by residues Cys-71, Cys-73, Cys-86, and Cys-89. Residues Asp-461, Asp-463, and Asp-465 each contribute to the Mg(2+) site. Residues Cys-815, Cys-889, Cys-896, and Cys-899 each contribute to the Zn(2+) site. The segment at 1388–1430 is disordered; the sequence is RRQEAPAPAATPEQQAEEVFASLGQGEGEGPSPSDEASGPEVE. The segment covering 1392-1405 has biased composition (low complexity); it reads APAPAATPEQQAEE.

This sequence belongs to the RNA polymerase beta' chain family. As to quaternary structure, the RNAP catalytic core consists of 2 alpha, 1 beta, 1 beta' and 1 omega subunit. When a sigma factor is associated with the core the holoenzyme is formed, which can initiate transcription. It depends on Mg(2+) as a cofactor. Requires Zn(2+) as cofactor.

It catalyses the reaction RNA(n) + a ribonucleoside 5'-triphosphate = RNA(n+1) + diphosphate. DNA-dependent RNA polymerase catalyzes the transcription of DNA into RNA using the four ribonucleoside triphosphates as substrates. This chain is DNA-directed RNA polymerase subunit beta', found in Halorhodospira halophila (strain DSM 244 / SL1) (Ectothiorhodospira halophila (strain DSM 244 / SL1)).